A 668-amino-acid chain; its full sequence is DNA ligase (668 aa).

NAD(+) contacts are provided by residues 37 to 41, 86 to 87, and E116; these read DAIYD and SL. K118 functions as the N6-AMP-lysine intermediate in the catalytic mechanism. NAD(+) contacts are provided by R139, E176, K289, and K313. Zn(2+) is bound by residues C407, C410, C425, and C430. In terms of domain architecture, BRCT spans 586-668; the sequence is AQSSALAGLT…RALIETREMP (83 aa).

This sequence belongs to the NAD-dependent DNA ligase family. LigA subfamily. Mg(2+) is required as a cofactor. The cofactor is Mn(2+).

The catalysed reaction is NAD(+) + (deoxyribonucleotide)n-3'-hydroxyl + 5'-phospho-(deoxyribonucleotide)m = (deoxyribonucleotide)n+m + AMP + beta-nicotinamide D-nucleotide.. Its function is as follows. DNA ligase that catalyzes the formation of phosphodiester linkages between 5'-phosphoryl and 3'-hydroxyl groups in double-stranded DNA using NAD as a coenzyme and as the energy source for the reaction. It is essential for DNA replication and repair of damaged DNA. This Gloeobacter violaceus (strain ATCC 29082 / PCC 7421) protein is DNA ligase.